Consider the following 158-residue polypeptide: Large ribosomal subunit protein bL19 (158 aa).

Residues 1–35 (MTADSKDTSMSEDNTETATAIENSSAMVTDVTSKS) are disordered. Residues 16 to 35 (ETATAIENSSAMVTDVTSKS) are compositionally biased toward polar residues.

The protein belongs to the bacterial ribosomal protein bL19 family.

Functionally, this protein is located at the 30S-50S ribosomal subunit interface and may play a role in the structure and function of the aminoacyl-tRNA binding site. This is Large ribosomal subunit protein bL19 from Prochlorococcus marinus (strain MIT 9313).